Consider the following 522-residue polypeptide: Cytochrome P450 1A1 (522 aa).

F229 contacts substrate. Residue C463 coordinates heme.

It belongs to the cytochrome P450 family. It depends on heme as a cofactor. Liver.

Its subcellular location is the endoplasmic reticulum membrane. The protein localises to the microsome membrane. It carries out the reaction an organic molecule + reduced [NADPH--hemoprotein reductase] + O2 = an alcohol + oxidized [NADPH--hemoprotein reductase] + H2O + H(+). In terms of biological role, cytochromes P450 are a group of heme-thiolate monooxygenases. They oxidize a variety of structurally unrelated compounds, including steroids, fatty acids, and xenobiotics. The chain is Cytochrome P450 1A1 (cyp1a1) from Oncorhynchus mykiss (Rainbow trout).